The following is a 354-amino-acid chain: Guanine nucleotide-binding protein G(o) subunit alpha (354 aa).

Gly-2 carries the N-myristoyl glycine lipid modification. Cys-3 carries the S-palmitoyl cysteine lipid modification. Residues 32-354 enclose the G-alpha domain; that stretch reads KDIKLLLLGA…ANNLRGCGLY (323 aa). A G1 motif region spans residues 35–48; it reads KLLLLGAGESGKST. GTP-binding positions include 40–47, 176–182, 201–205, 270–273, and Ala-326; these read GAGESGKS, LRTRVKT, DVGGQ, and NKKD. Ser-47 and Thr-182 together coordinate Mg(2+). The interval 174-182 is G2 motif; sequence DILRTRVKT. The tract at residues 197 to 206 is G3 motif; that stretch reads FKLFDVGGQR. Residues 266–273 are G4 motif; the sequence is ILFLNKKD. The interval 324 to 329 is G5 motif; that stretch reads TCATDT.

The protein belongs to the G-alpha family. G(i/o/t/z) subfamily. G proteins are composed of 3 units; alpha, beta and gamma. The alpha chain contains the guanine nucleotide binding site.

Functionally, guanine nucleotide-binding proteins (G proteins) are involved as modulators or transducers in various transmembrane signaling systems. The G(o) protein function is not clear. This chain is Guanine nucleotide-binding protein G(o) subunit alpha, found in Locusta migratoria (Migratory locust).